The following is a 71-amino-acid chain: Vitellogenin-B2 (71 aa).

Residues 1–15 (MRGIILALLLALAGC) form the signal peptide. The region spanning 24-71 (FSESKTYVYNYEGIILNGIPENGLARSGIKLNCKVELSGYAQRSYMLK) is the Vitellogenin domain.

Produced by the liver, secreted into the blood and then sequestered by receptor mediated endocytosis into growing oocytes, where it is generally cleaved, giving rise to the respective yolk components.

Functionally, precursor of the major egg-yolk proteins that are sources of nutrients during early development of oviparous organisms. This Xenopus laevis (African clawed frog) protein is Vitellogenin-B2.